The chain runs to 345 residues: Methylthioribose-1-phosphate isomerase (345 aa).

Residues 47–49, R90, and Q197 contribute to the substrate site; that span reads RGA. D238 serves as the catalytic Proton donor. Substrate is bound at residue 248–249; it reads NK.

Belongs to the eIF-2B alpha/beta/delta subunits family. MtnA subfamily.

The catalysed reaction is 5-(methylsulfanyl)-alpha-D-ribose 1-phosphate = 5-(methylsulfanyl)-D-ribulose 1-phosphate. Its pathway is amino-acid biosynthesis; L-methionine biosynthesis via salvage pathway; L-methionine from S-methyl-5-thio-alpha-D-ribose 1-phosphate: step 1/6. Functionally, catalyzes the interconversion of methylthioribose-1-phosphate (MTR-1-P) into methylthioribulose-1-phosphate (MTRu-1-P). This is Methylthioribose-1-phosphate isomerase from Caldanaerobacter subterraneus subsp. tengcongensis (strain DSM 15242 / JCM 11007 / NBRC 100824 / MB4) (Thermoanaerobacter tengcongensis).